Reading from the N-terminus, the 271-residue chain is Phosphatidylinositol transfer protein beta isoform (271 aa).

An N6-acetyllysine modification is found at Lys-215. Position 262 is a phosphoserine (Ser-262).

It belongs to the PtdIns transfer protein family. PI transfer class I subfamily. Constitutive phosphorylation of Ser-262 has no effect on phospholipid transfer activity but is required for Golgi targeting. In terms of tissue distribution, widely expressed in various tissues including brain.

The protein resides in the golgi apparatus. It is found in the golgi apparatus membrane. The protein localises to the endoplasmic reticulum membrane. The catalysed reaction is a 1,2-diacyl-sn-glycero-3-phosphocholine(in) = a 1,2-diacyl-sn-glycero-3-phosphocholine(out). It carries out the reaction a 1,2-diacyl-sn-glycero-3-phospho-(1D-myo-inositol)(in) = a 1,2-diacyl-sn-glycero-3-phospho-(1D-myo-inositol)(out). It catalyses the reaction an N-(acyl)-sphingosylphosphocholine(in) = an N-(acyl)-sphingosylphosphocholine(out). Phosphatidylinositol transfer activity is inhibited by N-ethylmaleimide. In terms of biological role, catalyzes the transfer of phosphatidylinositol and phosphatidylcholine between membranes. Also catalyzes the transfer of sphingomyelin. Required for COPI-mediated retrograde transport from the Golgi to the endoplasmic reticulum; phosphatidylinositol and phosphatidylcholine transfer activity is essential for this function. The sequence is that of Phosphatidylinositol transfer protein beta isoform (PITPNB) from Homo sapiens (Human).